We begin with the raw amino-acid sequence, 315 residues long: Petrobactin import system permease protein YclO (315 aa).

The next 9 membrane-spanning stretches (helical) occupy residues 7–27 (IALLVGLAIVCIGLFLFYDLG), 40–60 (VAAIVLTGGAIAFSTMIFQTI), 76–96 (LYMLIQTGIIFLFGSANMVIM), 100–120 (INFIISVLLMILFSLVLYQIM), 128–148 (IFFLLLIGIVFGTLFSSLSSF), 172–192 (INTDLLWLAFIIFLLTGVYVW), 223–243 (LIVVAILVSVSTALVGPIMFL), 262–282 (YLIAGSVFISIIALVGGQFVV), and 288–308 (FSTTLSVIINFAGGIYFIYLL).

Belongs to the binding-protein-dependent transport system permease family. FecCD subfamily. In terms of assembly, the complex is composed of two ATP-binding proteins (YclP), two transmembrane proteins (YclN and YclO) and a solute-binding protein (YclQ).

It localises to the cell membrane. Functionally, part of the ABC transporter complex YclNOPQ involved in uptake of ferric-petrobactin. Petrobactin is a photoreactive 3,4-catecholate siderophore produced by many members of the B.cereus group, including B.anthracis. Probably responsible for the translocation of the substrate across the membrane. The sequence is that of Petrobactin import system permease protein YclO (yclO) from Bacillus subtilis (strain 168).